Consider the following 431-residue polypeptide: Na(+)-translocating NADH-quinone reductase subunit F (431 aa).

A helical transmembrane segment spans residues 10–30; that stretch reads ISIASLVFCVIGLILSGIILI. The 2Fe-2S ferredoxin-type domain occupies 41 to 133; the sequence is CKLKINDDDS…DMCLEIEERY (93 aa). Residues Cys-76, Cys-82, Cys-85, and Cys-117 each contribute to the [2Fe-2S] cluster site. One can recognise an FAD-binding FR-type domain in the interval 136 to 286; that stretch reads ASSWEGTVVS…SGPYGESFMK (151 aa).

The protein belongs to the NqrF family. As to quaternary structure, composed of six subunits; NqrA, NqrB, NqrC, NqrD, NqrE and NqrF. [2Fe-2S] cluster serves as cofactor. Requires FAD as cofactor.

It is found in the cell inner membrane. It catalyses the reaction a ubiquinone + n Na(+)(in) + NADH + H(+) = a ubiquinol + n Na(+)(out) + NAD(+). Its function is as follows. NQR complex catalyzes the reduction of ubiquinone-1 to ubiquinol by two successive reactions, coupled with the transport of Na(+) ions from the cytoplasm to the periplasm. The first step is catalyzed by NqrF, which accepts electrons from NADH and reduces ubiquinone-1 to ubisemiquinone by a one-electron transfer pathway. The sequence is that of Na(+)-translocating NADH-quinone reductase subunit F from Chlamydia caviae (strain ATCC VR-813 / DSM 19441 / 03DC25 / GPIC) (Chlamydophila caviae).